The sequence spans 105 residues: Ferredoxin-2 (105 aa).

The 2Fe-2S ferredoxin-type domain maps to Tyr4–Asp94. Cys40, Cys45, Cys48, and Cys78 together coordinate [2Fe-2S] cluster.

It belongs to the 2Fe2S plant-type ferredoxin family. Forms a complex with heterodimeric ferredoxin-thioredoxin reductase (FTR) and thioredoxin. It depends on [2Fe-2S] cluster as a cofactor.

Functionally, ferredoxins are iron-sulfur proteins that transfer electrons in a wide variety of metabolic reactions. In Synechococcus sp. (strain ATCC 27144 / PCC 6301 / SAUG 1402/1) (Anacystis nidulans), this protein is Ferredoxin-2 (petF2).